The sequence spans 342 residues: Holliday junction branch migration complex subunit RuvB (342 aa).

Positions 1–22 (MTLKPVREVSPGSQEGEERLEQ) are disordered. The segment at 1–185 (MTLKPVREVS…FPIQERLGYY (185 aa)) is large ATPase domain (RuvB-L). ATP-binding positions include leucine 24, arginine 25, glycine 66, lysine 69, threonine 70, serine 71, 132-134 (EDY), arginine 175, tyrosine 185, and arginine 222. Threonine 70 serves as a coordination point for Mg(2+). Residues 186 to 256 (EPTELREIAV…IVETTLERLE (71 aa)) are small ATPAse domain (RuvB-S). The tract at residues 259 to 342 (GRGLDAMDRR…RPQGKQGSLI (84 aa)) is head domain (RuvB-H). Positions 295, 314, and 319 each coordinate DNA.

It belongs to the RuvB family. Homohexamer. Forms an RuvA(8)-RuvB(12)-Holliday junction (HJ) complex. HJ DNA is sandwiched between 2 RuvA tetramers; dsDNA enters through RuvA and exits via RuvB. An RuvB hexamer assembles on each DNA strand where it exits the tetramer. Each RuvB hexamer is contacted by two RuvA subunits (via domain III) on 2 adjacent RuvB subunits; this complex drives branch migration. In the full resolvosome a probable DNA-RuvA(4)-RuvB(12)-RuvC(2) complex forms which resolves the HJ.

It is found in the cytoplasm. It carries out the reaction ATP + H2O = ADP + phosphate + H(+). The RuvA-RuvB-RuvC complex processes Holliday junction (HJ) DNA during genetic recombination and DNA repair, while the RuvA-RuvB complex plays an important role in the rescue of blocked DNA replication forks via replication fork reversal (RFR). RuvA specifically binds to HJ cruciform DNA, conferring on it an open structure. The RuvB hexamer acts as an ATP-dependent pump, pulling dsDNA into and through the RuvAB complex. RuvB forms 2 homohexamers on either side of HJ DNA bound by 1 or 2 RuvA tetramers; 4 subunits per hexamer contact DNA at a time. Coordinated motions by a converter formed by DNA-disengaged RuvB subunits stimulates ATP hydrolysis and nucleotide exchange. Immobilization of the converter enables RuvB to convert the ATP-contained energy into a lever motion, pulling 2 nucleotides of DNA out of the RuvA tetramer per ATP hydrolyzed, thus driving DNA branch migration. The RuvB motors rotate together with the DNA substrate, which together with the progressing nucleotide cycle form the mechanistic basis for DNA recombination by continuous HJ branch migration. Branch migration allows RuvC to scan DNA until it finds its consensus sequence, where it cleaves and resolves cruciform DNA. The protein is Holliday junction branch migration complex subunit RuvB of Anaeromyxobacter sp. (strain Fw109-5).